Consider the following 201-residue polypeptide: 3-isopropylmalate dehydratase small subunit (201 aa).

The protein belongs to the LeuD family. LeuD type 1 subfamily. As to quaternary structure, heterodimer of LeuC and LeuD.

The catalysed reaction is (2R,3S)-3-isopropylmalate = (2S)-2-isopropylmalate. It functions in the pathway amino-acid biosynthesis; L-leucine biosynthesis; L-leucine from 3-methyl-2-oxobutanoate: step 2/4. In terms of biological role, catalyzes the isomerization between 2-isopropylmalate and 3-isopropylmalate, via the formation of 2-isopropylmaleate. This chain is 3-isopropylmalate dehydratase small subunit, found in Shewanella woodyi (strain ATCC 51908 / MS32).